The sequence spans 650 residues: Chaperone protein DnaK (650 aa).

Residue threonine 200 is modified to Phosphothreonine; by autocatalysis. Residues 611–636 (AQQAGAAGAAGAAEGAAHAGGAQQAA) show a composition bias toward low complexity. The tract at residues 611-637 (AQQAGAAGAAGAAEGAAHAGGAQQAAD) is disordered.

It belongs to the heat shock protein 70 family.

Its function is as follows. Acts as a chaperone. The sequence is that of Chaperone protein DnaK from Burkholderia ambifaria (strain MC40-6).